The following is a 265-amino-acid chain: MAEELRIMENKSREDTNLSPVSKIEIYSFFDPFSKDCFKLSAILSKLRIEYNKYIKVRHILNPSLKVLTKCQAQSTSDFDNIALAYKAAELQGRIRAERFIHLMQNEIIPKRDIITEDMISDCINNAGIDYQVFKEDLQKDKLTDSLKVDLHIAREMEIEQAPSLVFFSENVHEEGLKVEGLYPYHIYTYIINELMGQPIEKNLPPKLEYYIQKKQLVTMEELLTIYEWPEKLLNKELKKLTLQQKVEKLQYPEGEFWKSKMPQC.

The protein belongs to the SpxH family. In terms of assembly, interacts with Spx.

It localises to the cytoplasm. In terms of biological role, adapter protein required for efficient degradation of Spx by ClpXP under non-stress conditions. Interaction with Spx stabilizes Spx and exposes the C-terminus of Spx for recognition and proteolysis by ClpXP. The chain is ClpXP adapter protein SpxH from Staphylococcus epidermidis (strain ATCC 35984 / DSM 28319 / BCRC 17069 / CCUG 31568 / BM 3577 / RP62A).